The sequence spans 713 residues: Calpastatin (713 aa).

Disordered regions lie at residues 1–187 (MNPT…LDPM) and 211–506 (DKKE…PVLP). A compositionally biased stretch (basic residues) spans 21-30 (PNKKRHKKQA). Lys-32 is covalently cross-linked (Glycyl lysine isopeptide (Lys-Gly) (interchain with G-Cter in SUMO2)). Over residues 46–63 (VVHEKKTQEVKPKEHPEP) the composition is skewed to basic and acidic residues. Position 50 is an N6-acetyllysine (Lys-50). Positions 85–94 (SRSNEQPTSE) are enriched in polar residues. A phosphoserine mark is found at Ser-87 and Ser-134. Position 136 is a phosphothreonine (Thr-136). The Inhibitory domain 1 repeat unit spans residues 171–223 (TEEDNTTYTGPEVLDPMSSTYIEELGKREVTLPPKYRELLDKKEGIPVPPPDT). Ser-244 carries the post-translational modification Phosphoserine. Basic and acidic residues-rich tracts occupy residues 248 to 258 (DGKKTEKEKST), 304 to 332 (RKSE…KKCG), and 342 to 367 (YRLK…KPLS). The stretch at 307 to 359 (EPELDLSSIKEIDEAKAKEEKLKKCGEDDETVPPEYRLKPAMDKDGKPLLPEA) is one Inhibitory domain 2 repeat. Ser-367, Ser-369, and Ser-376 each carry phosphoserine. Residues 370–379 (ELIDELSEDF) are compositionally biased toward acidic residues. The span at 380-397 (DQSKRKEKQSKPTEKTKE) shows a compositional bias: basic and acidic residues. Phosphoserine is present on Ser-441. Positions 443–502 (GKKEADPEDGKPVEDKVKEKAKEEDREKLGEKEETIPPDYRLEEVKDKDGKTLPHKDPKE) are enriched in basic and acidic residues. One copy of the Inhibitory domain 3 repeat lies at 447-500 (ADPEDGKPVEDKVKEKAKEEDREKLGEKEETIPPDYRLEEVKDKDGKTLPHKDP). Residues Ser-517 and Ser-528 each carry the phosphoserine modification. Residues 536-713 (SAAVSEVVSQ…KQKSDGKSTS (178 aa)) form a disordered region. Residues 542 to 553 (VVSQTSAPTTHS) are compositionally biased toward polar residues. A phosphoserine mark is found at Ser-575 and Ser-577. Residues 583–636 (PDPDENKPIEDKVKEKAEAEHRDKLGERDDTIPPEYRHLLDKDEEGKSTKPPTK) form an Inhibitory domain 4 repeat. 2 stretches are compositionally biased toward basic and acidic residues: residues 583-646 (PDPD…KPEA) and 691-713 (KAKD…KSTS).

The protein belongs to the protease inhibitor I27 (calpastatin) family.

Its function is as follows. Specific inhibition of calpain (calcium-dependent cysteine protease). Plays a key role in postmortem tenderization of meat and have been proposed to be involved in muscle protein degradation in living tissue. The chain is Calpastatin (CAST) from Sus scrofa (Pig).